The sequence spans 75 residues: CLAVATA3/ESR (CLE)-related protein 2 (75 aa).

Positions 1-22 (MAKLSFTFCFLLFLLLSSIAAG) are cleaved as a signal peptide. The disordered stretch occupies residues 40-75 (PSIEATSPTVEDDQAAGSHGKSPERLSPGGPDPQHH). P67 and P70 each carry hydroxyproline. An O-linked (Ara...) hydroxyproline glycan is attached at P70.

Belongs to the CLV3/ESR signal peptide family. In terms of assembly, interacts with the extracellular leucine-rich repeat region of CLV1. In terms of processing, the O-glycosylation (arabinosylation) of the hydroxyproline Pro-70 enhances binding affinity of the CLE2p peptide for its receptor. As to expression, mostly expressed in roots and seedlings, and, to a lower extent, in apex.

The protein localises to the secreted. It is found in the extracellular space. In terms of biological role, extracellular signal peptide that regulates cell fate. May act with CLV1 as a ligand-receptor pair in a signal transduction pathway, coordinating growth between adjacent meristematic regions. In Arabidopsis thaliana (Mouse-ear cress), this protein is CLAVATA3/ESR (CLE)-related protein 2.